The chain runs to 967 residues: Dolichyl-phosphooligosaccharide-protein glycotransferase 1 (967 aa).

At 1–21 (MVKTQIKEKKKDEKVTIPLPG) the chain is on the cytoplasmic side. Residues 22-42 (KIKTVLAFLVVLAFAAYGFYI) traverse the membrane as a helical segment. Topologically, residues 43–112 (RHLTAGKYFS…ISIFGYNELE (70 aa)) are extracellular. The short motif at 53–55 (DPD) is the DXD motif 1 element. Asp55 contacts Mn(2+). Residues 113 to 133 (AFLLWPPFVGFLSVIGVYLLG) form a helical membrane-spanning segment. Topologically, residues 134-135 (RK) are cytoplasmic. The chain crosses the membrane as a helical span at residues 136–156 (VLNEWAGMWGAIILSVLTANF). Residues 157–165 (SRTFSGNAR) lie on the Extracellular side of the membrane. Mn(2+)-binding residues include Arg165 and Asp167. Positions 165-167 (RGD) match the DXD motif 2 motif. Residues 166-186 (GDGPFMMLFTFSAVLMLYYLT) form a helical membrane-spanning segment. Topologically, residues 187 to 193 (EENKNKK) are cytoplasmic. Residues 194 to 214 (IIWGTLFVLLAGISTAAWNGS) form a helical membrane-spanning segment. Position 215 (Pro215) is a topological domain, extracellular. Residues 216-236 (FGLMVLLGFASFQTIILFIFG) traverse the membrane as a helical segment. Residues 237 to 247 (KINELREFIKE) lie on the Cytoplasmic side of the membrane. A helical transmembrane segment spans residues 248–268 (YYPAYLGILAISYLLTIPGIG). A topological domain (extracellular) is located at residue Lys269. Residues 270 to 290 (IGGFVRFAFEVFLGLVFLAIV) traverse the membrane as a helical segment. Topologically, residues 291–306 (MLYGGKYLNYSDKKHR) are cytoplasmic. Residues 307 to 327 (FAVVAVIVIAGFAGAYIYVGP) traverse the membrane as a helical segment. Topologically, residues 328–360 (KLFTLMGGAYQSTQVYETVQELAKTDWGDVKVY) are extracellular. The TIXE motif signature appears at 345 to 348 (TVQE). The chain crosses the membrane as a helical span at residues 361 to 381 (YGVEKPNGIVFFLGLVGAMIV). Topologically, residues 382–396 (TARYLYKLFKDGRRP) are cytoplasmic. Residues 397–417 (HEELFAITFYVMSIYLLWTAA) traverse the membrane as a helical segment. A topological domain (extracellular) is located at residue Arg418. An a glycophospholipid-binding site is contributed by Arg418. The chain crosses the membrane as a helical span at residues 419-439 (FLFLASYAIALMSGVFAGYVL). The Cytoplasmic portion of the chain corresponds to 440–453 (ETVEKMKESIPIKA). The chain crosses the membrane as a helical span at residues 454–474 (ALGGVIAIMLLLIPLTHGPLL). Residues 475 to 967 (AQSAKSMRTT…LEVSASAPHH (493 aa)) lie on the Extracellular side of the membrane. The interacts with target acceptor peptide in protein substrate stretch occupies residues 511–513 (WWD). The WWDYG motif motif lies at 511–515 (WWDYG). Residue Tyr516 participates in a glycophospholipid binding. The short motif at 571-578 (DWAKFNAI) is the DK motif element.

This sequence belongs to the STT3 family. Mn(2+) serves as cofactor. Mg(2+) is required as a cofactor.

The protein localises to the cell membrane. It catalyses the reaction an archaeal dolichyl phosphooligosaccharide + [protein]-L-asparagine = an archaeal dolichyl phosphate + a glycoprotein with the oligosaccharide chain attached by N-beta-D-glycosyl linkage to a protein L-asparagine.. Its pathway is protein modification; protein glycosylation. In terms of biological role, oligosaccharyl transferase (OST) that catalyzes the initial transfer of a defined glycan (ManNAcXyl(2)GlcAMan(2)GalNAc in P.furiosus) from the lipid carrier dolichol-monophosphate to an asparagine residue within an Asn-X-Ser/Thr consensus motif in nascent polypeptide chains, the first step in protein N-glycosylation. This is Dolichyl-phosphooligosaccharide-protein glycotransferase 1 (aglB1) from Pyrococcus furiosus (strain ATCC 43587 / DSM 3638 / JCM 8422 / Vc1).